Reading from the N-terminus, the 455-residue chain is Argininosuccinate lyase (455 aa).

It belongs to the lyase 1 family. Argininosuccinate lyase subfamily.

The protein resides in the cytoplasm. It catalyses the reaction 2-(N(omega)-L-arginino)succinate = fumarate + L-arginine. It functions in the pathway amino-acid biosynthesis; L-arginine biosynthesis; L-arginine from L-ornithine and carbamoyl phosphate: step 3/3. The polypeptide is Argininosuccinate lyase (Shewanella halifaxensis (strain HAW-EB4)).